Reading from the N-terminus, the 257-residue chain is uncharacterized protein (257 aa).

This is an uncharacterized protein from Dictyostelium discoideum (Social amoeba).